Consider the following 215-residue polypeptide: Protein Thf1 (215 aa).

A coiled-coil region spans residues 188 to 209 (IELVQETIAAERRKKERRQAEQ).

This sequence belongs to the THF1 family.

May be involved in photosynthetic membrane biogenesis. The protein is Protein Thf1 of Synechococcus sp. (strain CC9902).